The chain runs to 429 residues: MGKNVVVLGTQWGDEGKGKIVDLLTEHAAAVVRYQGGHNAGHTLVIDGEKTVLHLIPSGVLREGVQCLIGNGVVVAPDALLREITKLEEKGVPVRERLRISPSCPLILSFHVALDQAREKARGELKIGTTGRGIGPAYEDKVARRGLRVGDLLNMPRFEDKLRELVDYHNFMLVGYYKEPAIEFEKTLAECKEYAELLKPLMLDVTAELHDLRRAGKDIMFEGAQGSLLDIDHGTYPYVTSSNTTAGGVATGSGVGPMFLDYILGITKAYTTRVGSGPFPTELFDEVGAHLAKQGHEFGATTGRARRCGWFDAVILRRAIDVNSISGICLTKLDVLDGLETINICTGYKDAQGNAVAPTDADSYVGLQPVYEEVPGWSESTVGAKTLEELPANARAYIKRVEELIGAPIDIISTGPDRNETIVLRHPFA.

GTP is bound by residues 13-19 (GDEGKGK) and 41-43 (GHT). The Proton acceptor role is filled by aspartate 14. Positions 14 and 41 each coordinate Mg(2+). IMP is bound by residues 14–17 (DEGK), 39–42 (NAGH), threonine 130, arginine 144, glutamine 225, threonine 240, and arginine 304. The active-site Proton donor is histidine 42. 300-306 (ATTGRAR) lines the substrate pocket. GTP-binding positions include arginine 306, 332-334 (KLD), and 413-415 (STG).

Belongs to the adenylosuccinate synthetase family. In terms of assembly, homodimer. Requires Mg(2+) as cofactor.

The protein resides in the cytoplasm. The catalysed reaction is IMP + L-aspartate + GTP = N(6)-(1,2-dicarboxyethyl)-AMP + GDP + phosphate + 2 H(+). It participates in purine metabolism; AMP biosynthesis via de novo pathway; AMP from IMP: step 1/2. Plays an important role in the de novo pathway of purine nucleotide biosynthesis. Catalyzes the first committed step in the biosynthesis of AMP from IMP. In Pseudomonas fluorescens (strain Pf0-1), this protein is Adenylosuccinate synthetase.